A 275-amino-acid polypeptide reads, in one-letter code: Release factor glutamine methyltransferase (275 aa).

S-adenosyl-L-methionine contacts are provided by residues 117-121 (GTGSG), D140, W168, and N182. 182-185 (NPPY) serves as a coordination point for substrate.

The protein belongs to the protein N5-glutamine methyltransferase family. PrmC subfamily.

It catalyses the reaction L-glutaminyl-[peptide chain release factor] + S-adenosyl-L-methionine = N(5)-methyl-L-glutaminyl-[peptide chain release factor] + S-adenosyl-L-homocysteine + H(+). Functionally, methylates the class 1 translation termination release factors RF1/PrfA and RF2/PrfB on the glutamine residue of the universally conserved GGQ motif. This chain is Release factor glutamine methyltransferase, found in Buchnera aphidicola subsp. Schizaphis graminum (strain Sg).